The sequence spans 153 residues: Deoxyuridine 5'-triphosphate nucleotidohydrolase (153 aa).

Residues 71 to 73, asparagine 84, 88 to 90, and methionine 98 each bind substrate; these read RSG and LID.

Belongs to the dUTPase family. The cofactor is Mg(2+).

The catalysed reaction is dUTP + H2O = dUMP + diphosphate + H(+). The protein operates within pyrimidine metabolism; dUMP biosynthesis; dUMP from dCTP (dUTP route): step 2/2. In terms of biological role, this enzyme is involved in nucleotide metabolism: it produces dUMP, the immediate precursor of thymidine nucleotides and it decreases the intracellular concentration of dUTP so that uracil cannot be incorporated into DNA. The protein is Deoxyuridine 5'-triphosphate nucleotidohydrolase of Hydrogenovibrio crunogenus (strain DSM 25203 / XCL-2) (Thiomicrospira crunogena).